The chain runs to 2718 residues: E3 SUMO-protein ligase RanBP2 (2718 aa).

Positions 1 to 100 are sufficient for interaction with Hsp83; sequence MFTTRKEVDA…DPRQSEVVID (100 aa). Residues 1-200 are sufficient for interaction with piwi; that stretch reads MFTTRKEVDA…EKMKIDQAFN (200 aa). TPR repeat units follow at residues 26 to 58 and 59 to 94; these read DIKG…VRDD and AVGH…DPRQ. Disordered stretches follow at residues 796–816 and 937–959; these read QQDR…VHNN and EHQQ…HPVV. Over residues 803–816 the composition is skewed to polar residues; it reads GIDNSFGSPDVHNN. Residues 808 to 809 form repeat 1; sequence FG. The 27 X 2 AA repeats of F-G stretch occupies residues 808–2581; that stretch reads FGSPDVHNNS…GEENETKLFG (1774 aa). Residues 938 to 948 are compositionally biased toward low complexity; it reads HQQQQQHQQQQ. 3 repeat units span residues 1028-1029, 1035-1036, and 1104-1105. Residues 1181-1208 are disordered; the sequence is QPVEKEPPANVVITSSDPLPKPTTASVQ. A compositionally biased stretch (polar residues) spans 1192–1208; it reads VITSSDPLPKPTTASVQ. Residues 1252–1253 form repeat 5; it reads FG. 2 disordered regions span residues 1263–1314 and 1483–1502; these read FKTQ…KPII and NKPQ…ATAA. Residues 1284–1299 show a composition bias toward polar residues; that stretch reads NQSGATDPNKTLPQDT. The RanBD1 1 domain occupies 1309–1445; it reads DFKPIIPLPD…FTKASEAAKS (137 aa). The segment covering 1483 to 1493 has biased composition (polar residues); sequence NKPQEQTKTQP. 4 tandem repeats follow at residues 1506–1507, 1539–1540, 1547–1548, and 1552–1553. The RanBD1 2 domain occupies 1605–1742; the sequence is QFVPVIALPD…VQKAQQSIGN (138 aa). Residues 1738–1761 are disordered; sequence QSIGNEPKKEEVPSAAGEKEKPIK. Over residues 1743 to 1760 the composition is skewed to basic and acidic residues; it reads EPKKEEVPSAAGEKEKPI. The stretch at 1763–1764 is repeat 10; the sequence is FG. The segment at 1770–1799 adopts a RanBP2-type 1 zinc-finger fold; sequence KAGSWNCQACYTNNGQDQLYCLACQEPKDA. Repeat copies occupy residues 1826–1827, 1842–1843, 1874–1875, and 1883–1884. The RanBP2-type 2 zinc finger occupies 1890-1919; sequence AVGSWSCSACYVNNPGESLYCSACDAPKND. A run of 2 repeats spans residues 1942-1943 and 1944-1945. Disordered regions lie at residues 1981 to 2021, 2154 to 2204, and 2239 to 2273; these read FTFS…TYFS, EDSP…THEV, and SLSR…KDAG. Over residues 2002 to 2016 the composition is skewed to acidic residues; that stretch reads EDEDNDSQEVEEEEN. The RanBD1 3 domain maps to 2019 to 2151; the sequence is YFSPVIPLPD…IKNALNETAK (133 aa). Residues 2161-2175 are compositionally biased toward polar residues; the sequence is SVSQSTEANKPSQKN. The span at 2239–2257 shows a compositional bias: low complexity; sequence SLSRNNSSASEASKTPSSA. A run of 11 repeats spans residues 2260-2261, 2313-2314, 2332-2333, 2352-2353, 2360-2361, 2366-2367, 2393-2394, 2399-2400, 2415-2416, 2421-2422, and 2580-2581. The segment at 2320–2346 is disordered; that stretch reads AEQQKKDSSESVFGGNKADSQSPATQE. The region spanning 2556–2699 is the RanBD1 4 domain; sequence HYDAIVELPD…VNSCIKRAKA (144 aa).

This sequence belongs to the RanBP2 E3 ligase family. Part of the nuclear pore complex. Forms a complex with Nxt1, sbr/Nxf1 and RanGAP. Interacts (via TPR repeats) with Hsp83; the interaction is required for the nuclear import of the sesquiterpenoid juvenile hormone receptor Met. Interacts (via N-terminus) with piwi. As to expression, expressed in both oocytes and nurse cells (at protein level).

Its subcellular location is the nucleus. It is found in the nuclear pore complex. In terms of biological role, E3 SUMO-protein ligase. Component of the nuclear pore complex (NPC), a complex required for trafficking across the nuclear envelope. Required for nuclear import of nuclear localization signal (NLS)-containing proteins in an importin alpha/importin beta-dependent manner, but also for the nuclear import of specific proteins such as phosphorylated Mad or the sesquiterpenoid juvenile hormone receptor Met as part of the juvenile hormone signal transduction pathway. Plays a role in nuclear mRNA export by recruiting the mRNA transport complex composed of Nxt1 and sbr/Nxf1 to the NPC. Essential during germline development for transposon silencing and piRNA biogenesis probably by regulating piwi localization to the nucleus. During oogenesis, required to form granules that modulate the biogenesis of annulate lamellae containing nuclear pore complex components. The sequence is that of E3 SUMO-protein ligase RanBP2 from Drosophila melanogaster (Fruit fly).